Here is a 64-residue protein sequence, read N- to C-terminus: MAKNKGVRIVITLECNECRSNPAKRSPGVSRYTTEKNRRNTTERLEIKKFCPHCNKSTPHKEIK.

Belongs to the bacterial ribosomal protein bL33 family.

This chain is Large ribosomal subunit protein bL33, found in Prochlorococcus marinus (strain MIT 9313).